We begin with the raw amino-acid sequence, 496 residues long: RNA-binding motif protein, Y chromosome, family 1 member E (496 aa).

The RRM domain maps to 8 to 85 (GKLFIGGLNR…KAIKVEQAKK (78 aa)). 2 disordered regions span residues 67–348 (DMNG…PHRD) and 453–496 (DQRN…SSRY). Composition is skewed to low complexity over residues 97-114 (PASS…SARG) and 149-159 (PVKRGPSSRSG). Polar residues predominate over residues 175-184 (NSWMGSQGPM). 6 stretches are compositionally biased toward basic and acidic residues: residues 204 to 214 (RNDRMSTRHDG), 242 to 253 (DNGHSNRDEHSS), 276 to 289 (AYRD…DESY), 313 to 326 (GYRD…HESY), 335 to 348 (SSRE…PHRD), and 484 to 496 (GESR…SSRY).

In terms of assembly, interacts with splicing factor proteins SFRS3/SRP20, TRA2B/SFRS10, KHDRBS1/SAM68 and KHDRBS3. In terms of tissue distribution, testis-specific.

It is found in the nucleus. RNA-binding protein which may be involved in spermatogenesis. Required for sperm development, possibly by participating in pre-mRNA splicing in the testis. The polypeptide is RNA-binding motif protein, Y chromosome, family 1 member E (RBMY1E) (Homo sapiens (Human)).